A 290-amino-acid polypeptide reads, in one-letter code: Triplex capsid protein 1 (290 aa).

The protein belongs to the herpesviridae TRX1 protein family. As to quaternary structure, interacts with TRX2, MCP and capsid vertex component 2/CVC2.

It localises to the virion. The protein localises to the host nucleus. In terms of biological role, structural component of the T=16 icosahedral capsid. The capsid is composed of pentamers and hexamers of major capsid protein/MCP, which are linked together by heterotrimers called triplexes. These triplexes are formed by a single molecule of triplex protein 1/TRX1 and two copies of triplex protein 2/TRX2. Additionally, TRX1 is required for efficient transport of TRX2 to the nucleus, which is the site of capsid assembly. The chain is Triplex capsid protein 1 from Human cytomegalovirus (strain AD169) (HHV-5).